A 396-amino-acid chain; its full sequence is S100P-binding protein (396 aa).

Residues 145-249 (CDPVLDKDKI…RKNSGSHKSG (105 aa)) are disordered. Basic and acidic residues-rich tracts occupy residues 148–161 (VLDKDKIDSSKETE) and 168–185 (EQTREDDPQPNESKRCTE). 2 stretches are compositionally biased toward polar residues: residues 202-215 (SSPSNNNIEQTASD) and 227-246 (VFSQISNHSEVPNRKNSGSH).

As to quaternary structure, interacts with S100P.

The protein localises to the nucleus. This Mus musculus (Mouse) protein is S100P-binding protein.